Reading from the N-terminus, the 200-residue chain is MGNLFGRKKQSRVTEQDRAILQLKQQRDKLRQYQKRVTQQLERERALARQLLRDGRKERAKLLLKKKRYREQLLDRTENQISSLEAMVQSIEFTQIEMKVMEGLQVGNECLNKMHQVMSIEEVERILDETQEAVEYQRQIDELLAGNFTQEDEDAILEELNAITQEQMELPEVPSEPLPDRNPEAPAKARSRQAELVAAS.

Residue Gly2 is the site of N-myristoyl glycine attachment. A coiled-coil region spans residues 10–145; that stretch reads QSRVTEQDRA…YQRQIDELLA (136 aa). The residue at position 119 (Ser119) is a Phosphoserine. Thr130 carries the post-translational modification Phosphothreonine. A Type-2 MIT-interacting motif motif is present at residues 168–179; sequence MELPEVPSEPLP. Residues 168–200 are disordered; sequence MELPEVPSEPLPDRNPEAPAKARSRQAELVAAS.

Belongs to the SNF7 family. As to quaternary structure, probable core component of the endosomal sorting required for transport complex III (ESCRT-III). ESCRT-III components are thought to multimerize to form a flat lattice on the perimeter membrane of the endosome. Several assembly forms of ESCRT-III may exist that interact and act sequentially. Interacts with VPS4A; the interaction is direct. Interacts with VPS4B; the interaction is direct. Interacts with CHMP4A, CHMP4B and CHMP4C. Interacts with SNF8, VPS25 and VPS36. Post-translationally, ISGylated in a CHMP5-dependent manner. Isgylation weakens its interaction with VPS4A.

The protein resides in the endomembrane system. It localises to the endosome membrane. It is found in the late endosome membrane. The protein localises to the membrane. Probable core component of the endosomal sorting required for transport complex III (ESCRT-III) which is involved in multivesicular bodies (MVBs) formation and sorting of endosomal cargo proteins into MVBs. MVBs contain intraluminal vesicles (ILVs) that are generated by invagination and scission from the limiting membrane of the endosome and mostly are delivered to lysosomes enabling degradation of membrane proteins, such as stimulated growth factor receptors, lysosomal enzymes and lipids. The MVB pathway appears to require the sequential function of ESCRT-O, -I,-II and -III complexes. ESCRT-III proteins mostly dissociate from the invaginating membrane before the ILV is released. The ESCRT machinery also functions in topologically equivalent membrane fission events, such as the terminal stages of cytokinesis. ESCRT-III proteins are believed to mediate the necessary vesicle extrusion and/or membrane fission activities, possibly in conjunction with the AAA ATPase VPS4. In the ESCRT-III complex, it probably serves as an acceptor for the ESCRT-II complex on endosomal membranes. The polypeptide is Charged multivesicular body protein 6 (Chmp6) (Mus musculus (Mouse)).